Here is a 325-residue protein sequence, read N- to C-terminus: MSSFLDYSVMSGEGSSCSVRAFHSDHGITTFQSCAVSVNNCGTDDRFMASRASPDGIPHQSYQAAVSSLGLAYGAHSACSSSYAPQSFCTTYNHYPLNQEVEPAAGFPQCGPLMYSGNISSSVVSQHRQGYGTTPLGQLQYTHSAYGAGHEQPSPFTGCSNPLSPLHAAHLEACCSPLSESASSAQTFDWMKVKRNPPKTGRSGEYGYGGQPNTVRTNFTTKQLTELEKEFHFNKYLTRARRVEIAAALQLNETQVKIWFQNRRMKQKKREKEGLLPTKPTSSDSGERNQEKVEDGESEKSVSAPSTPSPTSSTVSSGADSYPSN.

The Antp-type hexapeptide signature appears at 187–192 (TFDWMK). Disordered stretches follow at residues 194-215 (KRNPPKTGRSGEYGYGGQPNTV) and 264-325 (RMKQ…YPSN). The segment at residues 212–271 (PNTVRTNFTTKQLTELEKEFHFNKYLTRARRVEIAAALQLNETQVKIWFQNRRMKQKKRE) is a DNA-binding region (homeobox). Residues 285 to 300 (SGERNQEKVEDGESEK) are compositionally biased toward basic and acidic residues. The span at 301 to 317 (SVSAPSTPSPTSSTVSS) shows a compositional bias: low complexity.

The protein belongs to the Antp homeobox family. Labial subfamily.

The protein localises to the nucleus. Its function is as follows. Sequence-specific transcription factor which is part of a developmental regulatory system that provides cells with specific positional identities on the anterior-posterior axis. This Takifugu rubripes (Japanese pufferfish) protein is Homeobox protein Hox-A1a (hoxa1a).